The sequence spans 179 residues: MSRVGKQPVEIPSGVTVTVTPDNVVTVKGTKGQLEKAMHKDMKIAVEDNKVVVTRPSDSKNHKALHGLTRALINNMVIGVTEGFSKTLQLVGVGYKAQLKGKSLILNLGYSHPIEVASIEGVTFEIPDANTVVVKGINKELVGSVAADIRTFRKPEPYKGKGIKYSDEVIRRKEGKTGK.

The protein belongs to the universal ribosomal protein uL6 family. In terms of assembly, part of the 50S ribosomal subunit.

This protein binds to the 23S rRNA, and is important in its secondary structure. It is located near the subunit interface in the base of the L7/L12 stalk, and near the tRNA binding site of the peptidyltransferase center. The polypeptide is Large ribosomal subunit protein uL6 (Clostridium acetobutylicum (strain ATCC 824 / DSM 792 / JCM 1419 / IAM 19013 / LMG 5710 / NBRC 13948 / NRRL B-527 / VKM B-1787 / 2291 / W)).